The following is a 346-amino-acid chain: Protein pelota homolog (346 aa).

The protein belongs to the eukaryotic release factor 1 family. Pelota subfamily. Monomer. A divalent metal cation is required as a cofactor.

The protein localises to the cytoplasm. May function in recognizing stalled ribosomes, interact with stem-loop structures in stalled mRNA molecules, and effect endonucleolytic cleavage of the mRNA. May play a role in the release non-functional ribosomes and degradation of damaged mRNAs. Has endoribonuclease activity. The chain is Protein pelota homolog from Ignicoccus hospitalis (strain KIN4/I / DSM 18386 / JCM 14125).